Here is a 537-residue protein sequence, read N- to C-terminus: Sodium/hydrogen exchanger 9B2 (537 aa).

Positions Met-1 to Tyr-10 are enriched in basic and acidic residues. The disordered stretch occupies residues Met-1–Glu-28. Residues Met-1 to Arg-86 lie on the Cytoplasmic side of the membrane. Positions Pro-15–Gln-27 are enriched in polar residues. Phosphoserine is present on Ser-49. A helical membrane pass occupies residues Val-87 to Ile-104. Over Thr-105–Gly-113 the chain is Extracellular. The helical transmembrane segment at Asn-114–Gly-133 threads the bilayer. The Cytoplasmic segment spans residues Leu-134–Pro-144. A helical transmembrane segment spans residues Ser-145–Val-161. Residues Ile-162–Lys-171 lie on the Extracellular side of the membrane. A helical transmembrane segment spans residues Trp-172–Gly-189. Over Leu-190 to Leu-200 the chain is Cytoplasmic. The helical transmembrane segment at Lys-201–Leu-227 threads the bilayer. Over Gly-228–Trp-233 the chain is Extracellular. The helical transmembrane segment at Gly-234–Gly-242 threads the bilayer. Residues Ala-243–Leu-270 are Cytoplasmic-facing. Positions 244, 275, 278, and 279 each coordinate Na(+). Residues Leu-271 to Leu-290 traverse the membrane as a helical segment. Residues Gly-291–Val-300 lie on the Extracellular side of the membrane. A helical transmembrane segment spans residues Phe-301–Ile-324. Residues Gln-325 to Arg-339 lie on the Cytoplasmic side of the membrane. Residues Thr-340–Phe-357 traverse the membrane as a helical segment. The Extracellular segment spans residues Gly-358 to Gly-361. Residues Ser-362–Leu-373 form a helical membrane-spanning segment. The Cytoplasmic portion of the chain corresponds to Ala-374–Ala-390. Residues Val-391–Ala-411 form a helical membrane-spanning segment. Over Ser-412–Thr-417 the chain is Extracellular. The chain crosses the membrane as a helical span at residues Val-418–Val-440. The Cytoplasmic portion of the chain corresponds to Cys-441–Ala-461. Residues Thr-462 to Asp-473 traverse the membrane as a helical segment. Over Thr-474–Tyr-486 the chain is Extracellular. A helical transmembrane segment spans residues Gly-487–Ile-509. Residues Gly-510–Val-537 lie on the Cytoplasmic side of the membrane.

The protein belongs to the monovalent cation:proton antiporter 1 (CPA1) transporter (TC 2.A.36) family. In terms of assembly, homodimer. Dimerization is essential for SLC9B2 activity. Lipids seem to play a role in the stabilization of the dimerization subdomain. In terms of tissue distribution, widely expressed. High levels detected in the distal tubules of the kidney nephron. Detected in red blood cells (at protein level).

The protein localises to the cell membrane. Its subcellular location is the mitochondrion membrane. It is found in the endosome membrane. It localises to the recycling endosome membrane. The protein resides in the cytoplasmic vesicle. The protein localises to the secretory vesicle. Its subcellular location is the synaptic vesicle membrane. It is found in the cell projection. It localises to the cilium. The protein resides in the flagellum membrane. The protein localises to the basolateral cell membrane. Its subcellular location is the apical cell membrane. It carries out the reaction Li(+)(out) + H(+)(in) = Li(+)(in) + H(+)(out). The catalysed reaction is Li(+)(in) + Na(+)(out) = Li(+)(out) + Na(+)(in). The enzyme catalyses Na(+)(in) + H(+)(out) = Na(+)(out) + H(+)(in). With respect to regulation, allosterically inhibited by the N-terminal domain. Inhibited by phloretin. Its function is as follows. Electroneutral Na(+) Li(+)/H(+) antiporter that extrudes Na(+) or Li(+) in exchange for external protons across the membrane. Uses the proton gradient/membrane potential to extrude sodium. Contributes to the regulation of intracellular pH and sodium homeostasis. Also able to mediate Na(+)/Li(+) antiporter activity in kidney. May play a physiological role in renal tubular function and blood pressure homeostasis. Plays an important role for insulin secretion and clathrin-mediated endocytosis in beta-cells. Involved in sperm motility and fertility. It is controversial whether SLC9B2 plays a role in osteoclast differentiation or not. The polypeptide is Sodium/hydrogen exchanger 9B2 (Homo sapiens (Human)).